The primary structure comprises 140 residues: Cystatin-C (140 aa).

The signal sequence occupies residues 1–20; the sequence is MASPLRSLMLLLAVLAVAWA. The Secondary area of contact signature appears at 75–79; sequence QLVAG. 2 disulfide bridges follow: Cys93/Cys103 and Cys117/Cys137. An N-linked (GlcNAc...) asparagine glycan is attached at Asn99.

This sequence belongs to the cystatin family.

The protein resides in the secreted. As an inhibitor of cysteine proteinases, this protein is thought to serve an important physiological role as a local regulator of this enzyme activity. Known to inhibit cathepsin B, H, and L. The sequence is that of Cystatin-C (Cst3) from Rattus norvegicus (Rat).